The primary structure comprises 545 residues: Ribosomal protein uS12 methylthiotransferase RimO (545 aa).

The region spanning 7–129 (RRVALVTLGC…IGEHLDAVLG (123 aa)) is the MTTase N-terminal domain. [4Fe-4S] cluster-binding residues include cysteine 16, cysteine 52, cysteine 92, cysteine 197, cysteine 201, and cysteine 204. The 232-residue stretch at 183–414 (LTAGPVAALK…DLVEQLTATR (232 aa)) folds into the Radical SAM core domain. Residues 416 to 510 (QERIGSRVQV…GVDLVAEFTA (95 aa)) form the TRAM domain. Disordered stretches follow at residues 454–486 (LPGP…QPGV) and 516–545 (RPSA…ADGT). Residues 455–464 (PGPAGAAAGP) show a composition bias toward low complexity.

Belongs to the methylthiotransferase family. RimO subfamily. Requires [4Fe-4S] cluster as cofactor.

It localises to the cytoplasm. It carries out the reaction L-aspartate(89)-[ribosomal protein uS12]-hydrogen + (sulfur carrier)-SH + AH2 + 2 S-adenosyl-L-methionine = 3-methylsulfanyl-L-aspartate(89)-[ribosomal protein uS12]-hydrogen + (sulfur carrier)-H + 5'-deoxyadenosine + L-methionine + A + S-adenosyl-L-homocysteine + 2 H(+). Its function is as follows. Catalyzes the methylthiolation of an aspartic acid residue of ribosomal protein uS12. The sequence is that of Ribosomal protein uS12 methylthiotransferase RimO from Frankia alni (strain DSM 45986 / CECT 9034 / ACN14a).